We begin with the raw amino-acid sequence, 837 residues long: Anaphase-promoting complex subunit 4 (837 aa).

Low complexity-rich tracts occupy residues 59–81 (NDNN…NDNN) and 547–581 (SSSS…NNNN). 2 disordered regions span residues 59–89 (NDNN…KSNK) and 547–588 (SSSS…QSGN).

The protein belongs to the APC4 family. The APC/C is composed of at least 13 subunits that stay tightly associated throughout the cell cycle: anapc1, anapc2, anapc3, anapc4, anapc5, anapc6, anapc7, anapc8, anapc10, anapc11, cdc20, cdc26 and cdh1.

It is found in the nucleus. The protein operates within protein modification; protein ubiquitination. Component of the anaphase promoting complex/cyclosome (APC/C), a cell cycle-regulated E3 ubiquitin-protein ligase complex that controls progression through mitosis and the G1 phase of the cell cycle. This Dictyostelium discoideum (Social amoeba) protein is Anaphase-promoting complex subunit 4 (anapc4).